A 430-amino-acid polypeptide reads, in one-letter code: Histidinol dehydrogenase (430 aa).

NAD(+) contacts are provided by Tyr130, Gln191, and Asn214. Positions 237, 259, and 262 each coordinate substrate. The Zn(2+) site is built by Gln259 and His262. Active-site proton acceptor residues include Glu327 and His328. Positions 328, 361, 415, and 420 each coordinate substrate. Asp361 is a binding site for Zn(2+). His420 is a binding site for Zn(2+).

Belongs to the histidinol dehydrogenase family. It depends on Zn(2+) as a cofactor.

The catalysed reaction is L-histidinol + 2 NAD(+) + H2O = L-histidine + 2 NADH + 3 H(+). Its pathway is amino-acid biosynthesis; L-histidine biosynthesis; L-histidine from 5-phospho-alpha-D-ribose 1-diphosphate: step 9/9. Its function is as follows. Catalyzes the sequential NAD-dependent oxidations of L-histidinol to L-histidinaldehyde and then to L-histidine. This is Histidinol dehydrogenase from Brucella melitensis biotype 1 (strain ATCC 23456 / CCUG 17765 / NCTC 10094 / 16M).